The following is a 261-amino-acid chain: Kallikrein-1 (261 aa).

The N-terminal stretch at 1–18 is a signal peptide; it reads MRFLILFLALSLGGIDAA. A propeptide spans 19 to 24 (activation peptide); sequence PPVQSR. Residues 25–258 enclose the Peptidase S1 domain; it reads IVGGFNCEKN…FNTWIRETMA (234 aa). 5 disulfide bridges follow: Cys31–Cys173, Cys50–Cys66, Cys152–Cys219, Cys184–Cys198, and Cys209–Cys234. His65 serves as the catalytic Charge relay system. Asn102 is a glycosylation site (N-linked (GlcNAc...) asparagine). The active-site Charge relay system is the Asp120. The active-site Charge relay system is the Ser213.

The protein belongs to the peptidase S1 family. Kallikrein subfamily.

The enzyme catalyses Preferential cleavage of Arg-|-Xaa bonds in small molecule substrates. Highly selective action to release kallidin (lysyl-bradykinin) from kininogen involves hydrolysis of Met-|-Xaa or Leu-|-Xaa.. Glandular kallikreins cleave Met-Lys and Arg-Ser bonds in kininogen to release Lys-bradykinin. This is Kallikrein-1 (Klk1) from Mus musculus (Mouse).